A 251-amino-acid chain; its full sequence is Triosephosphate isomerase 1 (251 aa).

9 to 11 (NWK) provides a ligand contact to substrate. The active-site Electrophile is the His95. Glu167 acts as the Proton acceptor in catalysis. Substrate-binding positions include Gly173, Ser213, and 234–235 (GG).

Belongs to the triosephosphate isomerase family. Homodimer.

The protein resides in the cytoplasm. It carries out the reaction D-glyceraldehyde 3-phosphate = dihydroxyacetone phosphate. It participates in carbohydrate biosynthesis; gluconeogenesis. It functions in the pathway carbohydrate degradation; glycolysis; D-glyceraldehyde 3-phosphate from glycerone phosphate: step 1/1. Functionally, involved in the gluconeogenesis. Catalyzes stereospecifically the conversion of dihydroxyacetone phosphate (DHAP) to D-glyceraldehyde-3-phosphate (G3P). The sequence is that of Triosephosphate isomerase 1 from Listeria monocytogenes serovar 1/2a (strain ATCC BAA-679 / EGD-e).